A 311-amino-acid polypeptide reads, in one-letter code: Ribosomal RNA small subunit methyltransferase H (311 aa).

Residues 32–34 (AGH), Asp-52, Phe-79, Asp-100, and Gln-107 each bind S-adenosyl-L-methionine.

It belongs to the methyltransferase superfamily. RsmH family.

The protein localises to the cytoplasm. The catalysed reaction is cytidine(1402) in 16S rRNA + S-adenosyl-L-methionine = N(4)-methylcytidine(1402) in 16S rRNA + S-adenosyl-L-homocysteine + H(+). Functionally, specifically methylates the N4 position of cytidine in position 1402 (C1402) of 16S rRNA. The polypeptide is Ribosomal RNA small subunit methyltransferase H (Staphylococcus aureus (strain Mu3 / ATCC 700698)).